The sequence spans 693 residues: Elongation factor G (693 aa).

A tr-type G domain is found at 8-283 (NRCRNIGIMA…AVVDYLPSPL (276 aa)). GTP is bound by residues 17 to 24 (AHIDAGKT), 81 to 85 (DTPGH), and 135 to 138 (NKMD).

This sequence belongs to the TRAFAC class translation factor GTPase superfamily. Classic translation factor GTPase family. EF-G/EF-2 subfamily.

It is found in the cytoplasm. Catalyzes the GTP-dependent ribosomal translocation step during translation elongation. During this step, the ribosome changes from the pre-translocational (PRE) to the post-translocational (POST) state as the newly formed A-site-bound peptidyl-tRNA and P-site-bound deacylated tRNA move to the P and E sites, respectively. Catalyzes the coordinated movement of the two tRNA molecules, the mRNA and conformational changes in the ribosome. The sequence is that of Elongation factor G from Acidobacterium capsulatum (strain ATCC 51196 / DSM 11244 / BCRC 80197 / JCM 7670 / NBRC 15755 / NCIMB 13165 / 161).